A 1400-amino-acid polypeptide reads, in one-letter code: Clustered mitochondria protein homolog (1400 aa).

3 disordered regions span residues 1-39 (MVSK…KEAS), 56-78 (GHDQ…QAED), and 212-243 (GDTG…KERP). Residues 56-69 (GHDQAEEADSKQDG) are compositionally biased toward basic and acidic residues. The Clu domain occupies 380–622 (RAEDAYTSRL…RTFPPDLNFL (243 aa)). The tract at residues 684–741 (AALQDSNAAGAGSENKPLALESCDGTPDSPTSSESTLTPEDSEATTVSENSSAENQEA) is disordered. A compositionally biased stretch (low complexity) spans 707-722 (DGTPDSPTSSESTLTP). Polar residues predominate over residues 727–741 (ATTVSENSSAENQEA). 4 TPR repeats span residues 1088–1121 (AFHF…FNNV), 1130–1163 (CACL…SERV), 1172–1205 (IQEY…MLVV), and 1214–1247 (ALLD…NTKY). The segment covering 1377-1388 (QDSGKIQEQQGS) has biased composition (polar residues). The disordered stretch occupies residues 1377-1400 (QDSGKIQEQQGSHLELDDKLPVDD). Residues 1390-1400 (LELDDKLPVDD) are compositionally biased toward basic and acidic residues.

Belongs to the CLU family.

It is found in the cytoplasm. In terms of biological role, mRNA-binding protein involved in proper cytoplasmic distribution of mitochondria. The sequence is that of Clustered mitochondria protein homolog from Danio rerio (Zebrafish).